The following is a 73-amino-acid chain: Defensin-like protein 6 (73 aa).

The first 26 residues, 1–26, serve as a signal peptide directing secretion; that stretch reads MENKFFAAFFLLLVLFSSQEIIGGEG. Cystine bridges form between C29–C73, C40–C60, C46–C67, and C50–C69.

The protein belongs to the DEFL family.

Its subcellular location is the secreted. In terms of biological role, confers broad-spectrum resistance to pathogens. The chain is Defensin-like protein 6 (PDF2.5) from Arabidopsis thaliana (Mouse-ear cress).